Consider the following 168-residue polypeptide: Mediator of RNA polymerase II transcription subunit 31 (168 aa).

Acidic residues predominate over residues 113-159 (EGEDQDVEESEEETVENEQKESEDEEDVVIVEKPEDEQEEQAEEAAE). Residues 113 to 168 (EGEDQDVEESEEETVENEQKESEDEEDVVIVEKPEDEQEEQAEEAAEPTDTSLLNT) are disordered.

This sequence belongs to the Mediator complex subunit 31 family. Component of the Mediator complex.

Its subcellular location is the nucleus. Its function is as follows. Component of the Mediator complex, a coactivator involved in the regulated transcription of nearly all RNA polymerase II-dependent genes. Mediator functions as a bridge to convey information from gene-specific regulatory proteins to the basal RNA polymerase II transcription machinery. Mediator is recruited to promoters by direct interactions with regulatory proteins and serves as a scaffold for the assembly of a functional preinitiation complex with RNA polymerase II and the general transcription factors. The sequence is that of Mediator of RNA polymerase II transcription subunit 31 (mdt-31) from Caenorhabditis briggsae.